The following is a 687-amino-acid chain: Leucine-rich repeat and fibronectin type III domain-containing protein 1-like protein (687 aa).

An N-terminal signal peptide occupies residues 1-17; it reads MEWLIFSLLLLAVSASG. In terms of domain architecture, LRRNT spans 18-51; sequence QLCPKRCMCQNLSPSLAILCAKTGLLFVPTVIDR. Residues 18–527 are Extracellular-facing; it reads QLCPKRCMCQ…LRSHFLGGTM (510 aa). LRR repeat units lie at residues 52 to 73, 76 to 97, 100 to 121, 124 to 145, 149 to 170, 173 to 194, and 197 to 218; these read RTVE…DFAN, SLLH…TFAD, RLRA…HFRG, NLRH…AFDD, TLED…TIGR, NVNT…IFSN, and KLAR…PLFL. The N-linked (GlcNAc...) asparagine glycan is linked to asparagine 73. The LRRCT domain maps to 241 to 287; the sequence is NPLHCNCELLWLRRLTREDDLETCASPPDLTAKYFWTIPEEEFICDP. The region spanning 287–376 is the Ig-like domain; sequence PPVITRKSPK…STGTVELVVS (90 aa). Cysteine 309 and cysteine 358 form a disulfide bridge. N-linked (GlcNAc...) asparagine glycans are attached at residues asparagine 331, asparagine 340, asparagine 346, asparagine 383, asparagine 410, and asparagine 450. The interval 384–412 is disordered; that stretch reads STNRIREPDPGPSDILTSAKSTSSVSNET. Over residues 398–412 the composition is skewed to polar residues; sequence ILTSAKSTSSVSNET. Residues 415–510 enclose the Fibronectin type-III domain; sequence QERKVVLAEL…VGCVTFVTET (96 aa). The helical transmembrane segment at 528 to 548 threads the bilayer; that stretch reads IIIIGGIIVASVLVFIIILMI. Topologically, residues 549 to 687 are cytoplasmic; it reads RYKVYSQHGA…AQRDWSDFKI (139 aa). Disordered stretches follow at residues 563–601 and 630–687; these read GTAM…GSLG and EDIV…DFKI. Composition is skewed to polar residues over residues 565–576 and 657–672; these read AMTNVRSQTNGG and EGTS…SPQV. The span at 673–687 shows a compositional bias: basic and acidic residues; that stretch reads SDEKKAQRDWSDFKI.

This sequence belongs to the LRFN family.

Its subcellular location is the membrane. The protein resides in the synapse. May be involved in the regulation of excitatory synapses. The protein is Leucine-rich repeat and fibronectin type III domain-containing protein 1-like protein (lrfn1l) of Danio rerio (Zebrafish).